The primary structure comprises 359 residues: Peptide chain release factor 1 (359 aa).

N5-methylglutamine is present on Gln-235. Positions 287–312 (AQEASAMRSAQVGSGDRSERIRTYNF) are disordered.

It belongs to the prokaryotic/mitochondrial release factor family. Methylated by PrmC. Methylation increases the termination efficiency of RF1.

It is found in the cytoplasm. In terms of biological role, peptide chain release factor 1 directs the termination of translation in response to the peptide chain termination codons UAG and UAA. This is Peptide chain release factor 1 from Chlamydia trachomatis serovar A (strain ATCC VR-571B / DSM 19440 / HAR-13).